Reading from the N-terminus, the 1027-residue chain is MLKIFEKIFGSKHDKDIKKIQPVIQRINELQLSFQSLSDDGLKEMGLQLRSTARGALRPLEEKKQELLSKLSTPDIPLEEADRINDELDTLSEEYEKATVSVLEEILPDTFALVKDTCRRLKGHVYTVMGHDMTWDMVPYDVQLIGGMVLHSGRISEMATGEGKTLVSTLPIFLNALTGRGVHVVTVNDYLAQRDKEWMTPVFEYHGLSVGVILNTMHPFERREQYRCDITYGTNNEFGFDYLRDNMAGSVEEMVQRDFYFAIVDEVDSVLIDEARTPLIISGPVPNADNSKFQEIKPWIDQLVRNQQQLVASYLTDAEKILKTKPGDFDAGLALLRVKRGQPKNSRFIKMLSQQGLAKLVQGTENEFLKDNASRMHEVDDELFYAVDEKAGTIDLTDKGRDFLSRLSHQDSDIFLLPDVGSEIAIIESNASLSAAEKVKQKDAVYRLFADRSERLHNISQLLKAFSLFERDDEYVVQDGKVMIVDEFTGRILPGRRYSDGLHQAIEAKENVRIEGETQTMATITIQNFFRLYKKLAGMTGTAETEASEFYEIYKLDVVVIPTNRPIVRKDMDDLVYKTRREKYNAVVEKVEELQKKGQPVLVGTASVEVSETLSRMLRGKRIAHSVLNAKQHDREAEIVAAAGQKGAVTIATNMAGRGTDIKLGSGVRELGGLFILGSERHESRRIDRQLRGRAGRQGDPGESVFFVSLEDELMRLFGSERVISVMDRLGHEEGDVIEHTMITKSIERAQKKVEEQNFAIRKRLLEYDDVLNQQRDVIYTRRKNGLQKERLTSDIFDLLRDYCDMVVKKYEKAFDPEELEERLLRELSVEFRPESGLFDREGAKGIADKLYETALAFYSRKEKEIPEEIMGQIEKYAVLSVIDKKWREHLREIDSLREGINLRAYGQKDPLLEYKQEAFRLFVVLLQEIELETLSLAFKLFPVNPDEAREIEARQKKEALRQEKLVAQHQAAESIYQHIEESGTSNADNAGDNGPQTVIAEKKPGRNDLCPCGSGKKYKNCHGQQP.

ATP-binding positions include Q143, 161–165, and D661; that span reads GEGKT. Residues 981–1027 form a disordered region; that stretch reads EESGTSNADNAGDNGPQTVIAEKKPGRNDLCPCGSGKKYKNCHGQQP. C1011, C1013, C1022, and H1023 together coordinate Zn(2+).

This sequence belongs to the SecA family. In terms of assembly, monomer and homodimer. Part of the essential Sec protein translocation apparatus which comprises SecA, SecYEG and auxiliary proteins SecDF. Other proteins may also be involved. Requires Zn(2+) as cofactor.

It localises to the cell inner membrane. It is found in the cytoplasm. It catalyses the reaction ATP + H2O + cellular proteinSide 1 = ADP + phosphate + cellular proteinSide 2.. Its function is as follows. Part of the Sec protein translocase complex. Interacts with the SecYEG preprotein conducting channel. Has a central role in coupling the hydrolysis of ATP to the transfer of proteins into and across the cell membrane, serving as an ATP-driven molecular motor driving the stepwise translocation of polypeptide chains across the membrane. This chain is Protein translocase subunit SecA, found in Chlorobium limicola (strain DSM 245 / NBRC 103803 / 6330).